We begin with the raw amino-acid sequence, 1165 residues long: Vacuolar segregation protein 7 (1165 aa).

Residues 1-919 (MTEEDRKLTV…RKSPFVKVKN (919 aa)) lie on the Cytoplasmic side of the membrane. The tract at residues 118-147 (SVSSTNNNSNNALINHNPLSSHLSNPSSSL) is disordered. S164 is modified (phosphoserine). Disordered stretches follow at residues 215–241 (SNNTAPSTSNNIGSNTPPAPLLPLPSL), 274–423 (KAKN…SEKP), 461–497 (LIFPDSSSQQQQQQQQPPKQQQQQQNHGITSKISAPL), and 560–668 (EPPH…KRPL). Positions 216–230 (NNTAPSTSNNIGSNT) are enriched in polar residues. A compositionally biased stretch (low complexity) spans 334–345 (TTSTKTAPSTAP). A compositionally biased stretch (polar residues) spans 346-367 (LGSTDNTQALTASVSSSNADNH). Low complexity predominate over residues 375-391 (SSNNNGNNSNSASNKTN). Positions 393–412 (DIKNSNADLSASTSNNNAIN) are enriched in polar residues. Residues 413-423 (DDSHESNSEKP) are compositionally biased toward basic and acidic residues. 2 stretches are compositionally biased toward low complexity: residues 469-485 (QQQQQQQQPPKQQQQQQ) and 562-571 (PHQLQQQQPP). Polar residues predominate over residues 576–587 (SVDSYTSDNPDS). The span at 599 to 613 (SLVSLSKVSPHLLSS) shows a compositional bias: low complexity. Polar residues predominate over residues 614-662 (TSSNGNTISCPNVATNSQELEPNNDISTKKSLSNSTLRHSSANRNSNYG). The chain crosses the membrane as a helical; Signal-anchor for type II membrane protein span at residues 920–940 (FLYLAFVISSLLMTGFILGFL). Topologically, residues 941 to 1165 (LATNKELQDV…KDSMVHPGKK (225 aa)) are vacuolar. 2 N-linked (GlcNAc...) asparagine glycosylation sites follow: N1020 and N1099. A disordered region spans residues 1074 to 1121 (SPGSREAKHENDDDDDDDGDDGDDENNTNERQYKSKPNARDDKEDDTK). Residues 1085-1100 (DDDDDDDGDDGDDENN) show a composition bias toward acidic residues. The segment covering 1111–1121 (NARDDKEDDTK) has biased composition (basic and acidic residues).

As to quaternary structure, component of the PI(3,5)P2 regulatory complex, composed of ATG18, FIG4, FAB1, VAC14 and VAC7. VAC14 nucleates the assembly of the complex and serves as a scaffold. Post-translationally, N-glycosylated.

It is found in the vacuole membrane. Its function is as follows. The PI(3,5)P2 regulatory complex regulates both the synthesis and turnover of phosphatidylinositol 3,5-bisphosphate (PtdIns(3,5)P2). Positively regulates FAB1 kinase activity. Major activator of FAB1 during hyperosmotic shock and can elevate levels of PtdIns(3,5)P2 in the absence of VAC14 and FIG4. Directly involved in vacuolar membrane scission. Required for normal vacuole acidification, inheritance and morphology. This Saccharomyces cerevisiae (strain ATCC 204508 / S288c) (Baker's yeast) protein is Vacuolar segregation protein 7 (VAC7).